A 268-amino-acid polypeptide reads, in one-letter code: Esterase PIR7B (268 aa).

The active-site Acyl-ester intermediate is the S86. Active-site charge relay system residues include D218 and H246.

The protein belongs to the AB hydrolase superfamily.

In terms of biological role, exhibits esterase activity towards naphthol AS-acetate in vitro. The polypeptide is Esterase PIR7B (PIR7B) (Oryza sativa subsp. japonica (Rice)).